The chain runs to 443 residues: UDP-N-acetylmuramate--L-alanine ligase (443 aa).

111–117 (GAHGKTS) contacts ATP.

Belongs to the MurCDEF family.

Its subcellular location is the cytoplasm. It carries out the reaction UDP-N-acetyl-alpha-D-muramate + L-alanine + ATP = UDP-N-acetyl-alpha-D-muramoyl-L-alanine + ADP + phosphate + H(+). It functions in the pathway cell wall biogenesis; peptidoglycan biosynthesis. Its function is as follows. Cell wall formation. This chain is UDP-N-acetylmuramate--L-alanine ligase, found in Ligilactobacillus salivarius (strain UCC118) (Lactobacillus salivarius).